We begin with the raw amino-acid sequence, 262 residues long: MTERENNVYKAKLAEQAERYDEMVEAMKKVASMDVELTVEERNLLSVAYKNVIGARRASWRIITSIEQKEENKGAEEKLEMIKTYRGQVEKELRDICSDILNVLEKHLIPCATSGESKVFYYKMKGDYHRYLAEFATGSDRKDAAENSLIAYKAASDIAMNDLPPTHPIRLGLALNFSVFYYEILNSPDRACRLAKAAFDDAIAELDTLSEESYKDSTLIMQLLRDNLTLWTSDMQAEEVDPNAGDGEPKEQIQDVEDQDVS.

The interval 236 to 262 (QAEEVDPNAGDGEPKEQIQDVEDQDVS) is disordered. At Ser-262 the chain carries Phosphoserine.

This sequence belongs to the 14-3-3 family. As to quaternary structure, homodimer. Interacts with phosphorylated yki. Interacts with pav (when serine phosphorylated); the interaction is necessary for association of the complex pav-14-3-3epsilon complex to the microtubules, thereby inhibiting microtubule sliding.

In terms of biological role, positively regulates Ras-mediated pathways. Acts downstream or parallel to Raf, but upstream of nuclear factors in Ras signaling. Three mutants have been isolated, that suppress the rough eye phenotype caused by mutated Ras1 (sev-Ras1 v12). Inhibits yki activity by restricting its nuclear localization. Together with pav, has a role in the inhibition of microtubule sliding during neurite outgrowth. The sequence is that of 14-3-3 protein epsilon (14-3-3epsilon) from Drosophila melanogaster (Fruit fly).